Here is a 412-residue protein sequence, read N- to C-terminus: CCA-adding enzyme (412 aa).

ATP contacts are provided by Ser41 and Lys44. 2 residues coordinate CTP: Ser41 and Lys44. The Mg(2+) site is built by Asp53, Asp55, and Asp106. Residues His129, Lys149, and Tyr158 each coordinate ATP. CTP is bound by residues His129, Lys149, and Tyr158.

It belongs to the tRNA nucleotidyltransferase/poly(A) polymerase family. Archaeal CCA-adding enzyme subfamily. In terms of assembly, homodimer. Mg(2+) serves as cofactor.

The enzyme catalyses a tRNA precursor + 2 CTP + ATP = a tRNA with a 3' CCA end + 3 diphosphate. The catalysed reaction is a tRNA with a 3' CCA end + 2 CTP + ATP = a tRNA with a 3' CCACCA end + 3 diphosphate. Functionally, catalyzes the addition and repair of the essential 3'-terminal CCA sequence in tRNAs without using a nucleic acid template. Adds these three nucleotides in the order of C, C, and A to the tRNA nucleotide-73, using CTP and ATP as substrates and producing inorganic pyrophosphate. tRNA 3'-terminal CCA addition is required both for tRNA processing and repair. Also involved in tRNA surveillance by mediating tandem CCA addition to generate a CCACCA at the 3' terminus of unstable tRNAs. While stable tRNAs receive only 3'-terminal CCA, unstable tRNAs are marked with CCACCA and rapidly degraded. The polypeptide is CCA-adding enzyme (Saccharolobus islandicus (strain Y.N.15.51 / Yellowstone #2) (Sulfolobus islandicus)).